We begin with the raw amino-acid sequence, 1452 residues long: Protein clueless (1452 aa).

Disordered stretches follow at residues 1-93 and 266-288; these read MALE…SNGH and KKTR…VSEP. The span at 8 to 24 shows a compositional bias: low complexity; it reads KNSNATATSDATATKAS. The segment covering 42-59 has biased composition (polar residues); that stretch reads PIPNSNHQNSNQNLVNGN. Positions 68–77 are enriched in basic residues; the sequence is AKKKGKKNRN. Ser272 carries the phosphoserine modification. In terms of domain architecture, Clu spans 426–668; sequence RAEDAFSSKL…RTFPPDVNFL (243 aa). Disordered regions lie at residues 726-775, 962-1013, and 1414-1452; these read KQSE…GDTK, AVSS…SSVS, and ANNN…ATSS. Positions 750–766 are enriched in basic and acidic residues; it reads GADKTDVKEEKNEENEK. A compositionally biased stretch (basic residues) spans 970-985; sequence KKRGNGGKHNKHKSSK. Positions 990-1013 are enriched in low complexity; it reads QQQQQATGNQNGSSSGSSNGSSVS. Positions 1423-1433 are enriched in basic and acidic residues; that stretch reads AVPKDVEEQKE.

Belongs to the CLU family.

It is found in the cytoplasm. In terms of biological role, mRNA-binding protein involved in proper cytoplasmic distribution of mitochondria. The chain is Protein clueless from Drosophila erecta (Fruit fly).